Reading from the N-terminus, the 1177-residue chain is Lysylphosphatidylglycerol biosynthesis bifunctional protein LysX (1177 aa).

2 disordered regions span residues 1 to 40 (MRRAGRSRQFSSVEEAFSTSAARPGRRGRRSGRENTAKFV) and 61 to 85 (VTLASPGSRSGSGPRSGPRLGPANR). Residues 1–676 (MRRAGRSRQF…LLHHDGSAPD (676 aa)) form a phosphatidylglycerol lysyltransferase region. The span at 8–21 (RQFSSVEEAFSTSA) shows a compositional bias: polar residues. Positions 65 to 82 (SPGSRSGSGPRSGPRLGP) are enriched in low complexity. 6 helical membrane passes run 93–113 (VPAAAGWTVGVIATVSLLGSV), 135–155 (FPDTSIAWSFVLALLAAALTA), 159–179 (IAWLLLLGNMILAAALNVADI), 189–209 (IFGENLGFAVHIVAIVLLVLA), 227–247 (AVLVAGDVVGILVSWGLVELF), and 281–301 (VFLNAIFGLFGALALIMATIV). The tract at residues 673 to 693 (SAPDVSGLRPERTDAEEARSR) is disordered. The lysine--tRNA ligase stretch occupies residues 677-1177 (VSGLRPERTD…TLPFPLAKPH (501 aa)). The span at 681–693 (RPERTDAEEARSR) shows a compositional bias: basic and acidic residues. Mg(2+) contacts are provided by D1089 and E1096.

In the N-terminal section; belongs to the LPG synthetase family. The protein in the C-terminal section; belongs to the class-II aminoacyl-tRNA synthetase family. It depends on Mg(2+) as a cofactor.

The protein resides in the cell membrane. The catalysed reaction is tRNA(Lys) + L-lysine + ATP = L-lysyl-tRNA(Lys) + AMP + diphosphate. The enzyme catalyses L-lysyl-tRNA(Lys) + a 1,2-diacyl-sn-glycero-3-phospho-(1'-sn-glycerol) = a 1,2-diacyl-sn-glycero-3-phospho-1'-(3'-O-L-lysyl)-sn-glycerol + tRNA(Lys). In terms of biological role, catalyzes the production of L-lysyl-tRNA(Lys)transfer and the transfer of a lysyl group from L-lysyl-tRNA(Lys) to membrane-bound phosphatidylglycerol (PG), which produces lysylphosphatidylglycerol (LPG), one of the components of the bacterial membrane with a positive net charge. LPG synthesis contributes to the resistance to cationic antimicrobial peptides (CAMPs) and likely protects M.tuberculosis against the CAMPs produced by competiting microorganisms (bacteriocins). In fact, the modification of anionic phosphatidylglycerol with positively charged L-lysine results in repulsion of the peptides. The chain is Lysylphosphatidylglycerol biosynthesis bifunctional protein LysX (lysX) from Mycobacterium avium (strain 104).